A 328-amino-acid polypeptide reads, in one-letter code: Cytochrome f (328 aa).

An N-terminal signal peptide occupies residues 1–44 (MRTPDFSAIWQASKQLTARIILLAFATFALYVFHDLAFPQGAAA). Residues Tyr45, Cys66, Cys69, and His70 each contribute to the heme site. A helical membrane pass occupies residues 294 to 314 (IKGLMVFLAGIMLAQILLVIK).

It belongs to the cytochrome f family. The 4 large subunits of the cytochrome b6-f complex are cytochrome b6, subunit IV (17 kDa polypeptide, PetD), cytochrome f and the Rieske protein, while the 4 small subunits are PetG, PetL, PetM and PetN. The complex functions as a dimer. Requires heme as cofactor.

The protein localises to the cellular thylakoid membrane. Its function is as follows. Component of the cytochrome b6-f complex, which mediates electron transfer between photosystem II (PSII) and photosystem I (PSI), cyclic electron flow around PSI, and state transitions. This is Cytochrome f from Rippkaea orientalis (strain PCC 8801 / RF-1) (Cyanothece sp. (strain PCC 8801)).